The chain runs to 310 residues: Formyltetrahydrofolate deformylase (310 aa).

A disordered region spans residues 1 to 30; it reads MGKGSMTAHATPNEPDYPPPPGGPPPPADI. The span at 15–28 shows a compositional bias: pro residues; sequence PDYPPPPGGPPPPA. One can recognise an ACT domain in the interval 32-108; sequence RLLLRCHDRP…VADKFGIDYR (77 aa). Residue aspartate 255 is part of the active site.

This sequence belongs to the PurU family.

The enzyme catalyses (6R)-10-formyltetrahydrofolate + H2O = (6S)-5,6,7,8-tetrahydrofolate + formate + H(+). It participates in purine metabolism; IMP biosynthesis via de novo pathway; formate from 10-formyl-5,6,7,8-tetrahydrofolate: step 1/1. Its function is as follows. Catalyzes the hydrolysis of 10-formyltetrahydrofolate (formyl-FH4) to formate and tetrahydrofolate (FH4). The sequence is that of Formyltetrahydrofolate deformylase from Mycobacterium bovis (strain ATCC BAA-935 / AF2122/97).